The chain runs to 355 residues: uncharacterized protein (355 aa).

The transit peptide at 1-49 (MPMTVVSGRFSTALLPTCFSLSRLHSVKYAAQRRVVFVSRSAHASSASV) directs the protein to the chloroplast.

This sequence belongs to the methyltransferase superfamily.

Its subcellular location is the plastid. It is found in the chloroplast. The protein resides in the plastoglobule. This is an uncharacterized protein from Arabidopsis thaliana (Mouse-ear cress).